The following is a 306-amino-acid chain: Formimidoylglutamase (306 aa).

Positions 1 to 13 are enriched in polar residues; it reads MFQNATDWTPTST. Residues 1–36 form a disordered region; that stretch reads MFQNATDWTPTSTDPRDEQFGGVVEPVPTPSDADDY. Residues asparagine 123, aspartate 147, histidine 149, aspartate 151, aspartate 234, and aspartate 236 each contribute to the Mn(2+) site.

This sequence belongs to the arginase family. It depends on Mn(2+) as a cofactor.

It catalyses the reaction N-formimidoyl-L-glutamate + H2O = formamide + L-glutamate. Its pathway is amino-acid degradation; L-histidine degradation into L-glutamate; L-glutamate from N-formimidoyl-L-glutamate (hydrolase route): step 1/1. In terms of biological role, catalyzes the conversion of N-formimidoyl-L-glutamate to L-glutamate and formamide. The polypeptide is Formimidoylglutamase (Halobacterium salinarum (strain ATCC 29341 / DSM 671 / R1)).